Reading from the N-terminus, the 409-residue chain is Microfibrillar-associated protein 3-like (409 aa).

The signal sequence occupies residues 1-28 (MGLLKSHLTVCLPPSVPFLILVSTLATA). The Extracellular portion of the chain corresponds to 29–148 (KSVTNSTLNG…TLRVIFTSGD (120 aa)). Residues Asn-33, Asn-37, Asn-67, Asn-111, and Asn-135 are each glycosylated (N-linked (GlcNAc...) asparagine). One can recognise an Ig-like C2-type domain in the interval 47–141 (PVIIARTDHI…GTINNTVTLR (95 aa)). Residues Cys-68 and Cys-125 are joined by a disulfide bond. The chain crosses the membrane as a helical span at residues 149-169 (MGVYYMVVCLVAFTIVMILNI). The Cytoplasmic portion of the chain corresponds to 170-409 (TRLCMMSSHL…NTCIIYESHV (240 aa)). Tyr-287 carries the post-translational modification Phosphotyrosine. Residues Ser-298, Ser-303, Ser-306, and Ser-307 each carry the phosphoserine modification. The tract at residues 319–392 (VSVHPQSKKD…LPPAHLETTE (74 aa)) is disordered. Residues 333 to 348 (QEGENLEVKDEEETEP) show a composition bias toward acidic residues. Residues 362-372 (DITTTELTSEE) show a composition bias toward polar residues.

The protein localises to the cell membrane. The protein resides in the nucleus. It is found in the cytoplasm. May participate in the nuclear signaling of EGFR and MAPK1/ERK2. This is Microfibrillar-associated protein 3-like (Mfap3l) from Rattus norvegicus (Rat).